A 437-amino-acid polypeptide reads, in one-letter code: UDP-N-acetylmuramate--L-alanine ligase (437 aa).

An ATP-binding site is contributed by 108–114 (GAHGKTS).

The protein belongs to the MurCDEF family.

It localises to the cytoplasm. The catalysed reaction is UDP-N-acetyl-alpha-D-muramate + L-alanine + ATP = UDP-N-acetyl-alpha-D-muramoyl-L-alanine + ADP + phosphate + H(+). The protein operates within cell wall biogenesis; peptidoglycan biosynthesis. Cell wall formation. This Staphylococcus haemolyticus (strain JCSC1435) protein is UDP-N-acetylmuramate--L-alanine ligase.